A 968-amino-acid polypeptide reads, in one-letter code: RNA polymerase-associated protein RapA (968 aa).

One can recognise a Helicase ATP-binding domain in the interval 164 to 334 (DVGRRHAPRV…FARLRLLDPN (171 aa)). 177 to 184 (DEVGLGKT) is an ATP binding site. The short motif at 280–283 (DEAH) is the DEAH box element. A Helicase C-terminal domain is found at 490–662 (RVEWLMGYLT…YLASPDQTEG (173 aa)).

The protein belongs to the SNF2/RAD54 helicase family. RapA subfamily. In terms of assembly, interacts with the RNAP. Has a higher affinity for the core RNAP than for the holoenzyme. Its ATPase activity is stimulated by binding to RNAP.

Transcription regulator that activates transcription by stimulating RNA polymerase (RNAP) recycling in case of stress conditions such as supercoiled DNA or high salt concentrations. Probably acts by releasing the RNAP, when it is trapped or immobilized on tightly supercoiled DNA. Does not activate transcription on linear DNA. Probably not involved in DNA repair. The sequence is that of RNA polymerase-associated protein RapA from Shigella flexneri serotype 5b (strain 8401).